The following is a 1031-amino-acid chain: Translation initiation factor IF-2 (1031 aa).

Disordered stretches follow at residues 33–369 (KSHS…GDVL) and 388–436 (LKPL…AESL). A compositionally biased stretch (basic and acidic residues) spans 45 to 56 (ELVRSKLSEPRV). Over residues 96 to 105 (PAPAQQQAAA) the composition is skewed to low complexity. Residues 108-123 (ASSSKPSPQRPDQLSS) show a composition bias toward polar residues. A compositionally biased stretch (low complexity) spans 148-171 (PAAQEPQPAAASTRPEAAAKAGSP). A compositionally biased stretch (pro residues) spans 184–200 (VLPPPRRAASGPEPPQR). Positions 250–281 (TRPEPRSPVAKKEESSDSGKADEAPRPQRRLE) are enriched in basic and acidic residues. The span at 286–299 (PTRPVAKPLPPEPD) shows a compositional bias: pro residues. Residues 419–435 (RPSASAEATAPEAAAES) are compositionally biased toward low complexity. Residues 522–695 (PRPPVVTIMG…LLVADVAELQ (174 aa)) form the tr-type G domain. The tract at residues 531–538 (GHVDHGKT) is G1. 531–538 (GHVDHGKT) contacts GTP. The tract at residues 556-560 (GITQR) is G2. The interval 581-584 (DTPG) is G3. Residues 581–585 (DTPGH) and 635–638 (NKID) each bind GTP. The segment at 635 to 638 (NKID) is G4. The interval 671-673 (SAL) is G5.

It belongs to the TRAFAC class translation factor GTPase superfamily. Classic translation factor GTPase family. IF-2 subfamily.

Its subcellular location is the cytoplasm. Its function is as follows. One of the essential components for the initiation of protein synthesis. Protects formylmethionyl-tRNA from spontaneous hydrolysis and promotes its binding to the 30S ribosomal subunits. Also involved in the hydrolysis of GTP during the formation of the 70S ribosomal complex. The polypeptide is Translation initiation factor IF-2 (Synechococcus sp. (strain JA-3-3Ab) (Cyanobacteria bacterium Yellowstone A-Prime)).